The following is a 104-amino-acid chain: L-rhamnose mutarotase (104 aa).

Residue Tyr18 participates in substrate binding. Catalysis depends on His22, which acts as the Proton donor. Residues Tyr41 and 76 to 77 (WW) each bind substrate.

It belongs to the rhamnose mutarotase family. Homodimer.

Its subcellular location is the cytoplasm. The catalysed reaction is alpha-L-rhamnose = beta-L-rhamnose. The protein operates within carbohydrate metabolism; L-rhamnose metabolism. Functionally, involved in the anomeric conversion of L-rhamnose. This chain is L-rhamnose mutarotase, found in Opitutus terrae (strain DSM 11246 / JCM 15787 / PB90-1).